Consider the following 535-residue polypeptide: T-complex protein 1 subunit zeta 2 (535 aa).

This sequence belongs to the TCP-1 chaperonin family. Heterooligomeric complex of about 850 to 900 kDa that forms two stacked rings, 12 to 16 nm in diameter.

The protein resides in the cytoplasm. In terms of biological role, molecular chaperone; assists the folding of proteins upon ATP hydrolysis. Known to play a role, in vitro, in the folding of actin and tubulin. The polypeptide is T-complex protein 1 subunit zeta 2 (Arabidopsis thaliana (Mouse-ear cress)).